We begin with the raw amino-acid sequence, 86 residues long: MKTLLLTLVVVTIVCLDLGYTLTCLICPERYCQKVHTCRGEEKLCVKRFYDEKALGWRAKRGCAATCPEAKPKETVECCSTDKCNK.

The signal sequence occupies residues 1–21 (MKTLLLTLVVVTIVCLDLGYT). 5 cysteine pairs are disulfide-bonded: Cys-24/Cys-45, Cys-27/Cys-32, Cys-38/Cys-63, Cys-67/Cys-78, and Cys-79/Cys-84.

As to expression, expressed by the venom gland.

The protein resides in the secreted. Functionally, binds with low affinity to muscular (alpha-1-beta-1-delta-epsilon/CHRNA1-CHRNB1-CHRND-CHRNE) and very low affinity to neuronal (alpha-7/CHRNA7) nicotinic acetylcholine receptor (nAChR). This is Neurotoxin 3FTx-8a from Bungarus fasciatus (Banded krait).